Here is a 372-residue protein sequence, read N- to C-terminus: MHNQAPIQRRKSTRIYVGNVPIGDGAPIAVQSMTNTRTTDVEATVNQIKALERVGADIVRVSVPTMDAAEAFKLIKQQVNVPLVADIHFDYRIALKVAEYDVDCLRINPGNIGNEERIRMVVDCARDKNIPIRIGVNAGSLEKDLQEKYGEPTPQALLESAMRHVDHLDRLNFDQFKVSVKASDVFLAVESYRLLAKQIDQPLHLGITEAGGARSGAVKSAIGLGLLLSEGIGDTLRVSLAADPVEEIKVGFDILKSLRIRARGINFIACPTCSRQEFDVIGTVNALEQRLEDIITPMDVSIIGCVVNGPGEALVSTLGVTGGNKKSGLYEDGVRKDRLDNDDMIAQLESRIRAKASQLDEARRIDVLQVEK.

Residues Cys-270, Cys-273, Cys-305, and Glu-312 each contribute to the [4Fe-4S] cluster site.

The protein belongs to the IspG family. [4Fe-4S] cluster is required as a cofactor.

The enzyme catalyses (2E)-4-hydroxy-3-methylbut-2-enyl diphosphate + oxidized [flavodoxin] + H2O + 2 H(+) = 2-C-methyl-D-erythritol 2,4-cyclic diphosphate + reduced [flavodoxin]. It functions in the pathway isoprenoid biosynthesis; isopentenyl diphosphate biosynthesis via DXP pathway; isopentenyl diphosphate from 1-deoxy-D-xylulose 5-phosphate: step 5/6. In terms of biological role, converts 2C-methyl-D-erythritol 2,4-cyclodiphosphate (ME-2,4cPP) into 1-hydroxy-2-methyl-2-(E)-butenyl 4-diphosphate. The protein is 4-hydroxy-3-methylbut-2-en-1-yl diphosphate synthase (flavodoxin) of Salmonella paratyphi B (strain ATCC BAA-1250 / SPB7).